The chain runs to 527 residues: Peptide chain release factor 3 (527 aa).

Positions 11–278 constitute a tr-type G domain; it reads AKRRTFAIIS…GFVEWAPAPL (268 aa). Residues 20–27, 87–91, and 141–144 each bind GTP; these read SHPDAGKT, DTPGH, and NKMD.

It belongs to the TRAFAC class translation factor GTPase superfamily. Classic translation factor GTPase family. PrfC subfamily.

Its subcellular location is the cytoplasm. In terms of biological role, increases the formation of ribosomal termination complexes and stimulates activities of RF-1 and RF-2. It binds guanine nucleotides and has strong preference for UGA stop codons. It may interact directly with the ribosome. The stimulation of RF-1 and RF-2 is significantly reduced by GTP and GDP, but not by GMP. The protein is Peptide chain release factor 3 of Teredinibacter turnerae (strain ATCC 39867 / T7901).